We begin with the raw amino-acid sequence, 132 residues long: Fatty acid-binding protein, adipocyte (132 aa).

An N-acetylcysteine modification is found at cysteine 2. Position 13 is a phosphoserine (serine 13). Tyrosine 20 is modified (phosphotyrosine; by Tyr-kinases). The Nuclear localization signal motif lies at 22–32 (KEVGVGFATRK). 127 to 129 (RVY) contacts a fatty acid.

Belongs to the calycin superfamily. Fatty-acid binding protein (FABP) family. As to quaternary structure, monomer. Homodimer. Interacts with PPARG.

It is found in the cytoplasm. It localises to the nucleus. Its function is as follows. Lipid transport protein in adipocytes. Binds both long chain fatty acids and retinoic acid. Delivers long-chain fatty acids and retinoic acid to their cognate receptors in the nucleus. The chain is Fatty acid-binding protein, adipocyte (FABP4) from Cervus elaphus (Red deer).